A 396-amino-acid polypeptide reads, in one-letter code: MSKYKRIFTIVIDSLGIGAMNDSEKYGDVNVDTLGHIAESVDTFNIPNLQKMGIANLHPIKHVAPVENPIGYQAKMAEASVGKDTMTGHWEMMGLHITKPFKTFTDTGFPQELLDELTARTGHKIVGNKSASGTEILDELGEHQIATGDMIVYTSADSVLQICGQEETFGLEELYRCCEIARELTLKDEWKVGRIIARPYLGTKKGEFKRTSNRHDYALKPYGRTVLNELKDNNFDVISVGKIKDIFDGEGITEGNKSKSSVHGMEQTLEIMDRDFTGFCFVNLVDFDALWGHRRNPQGYAEELEKFDVNLGKVLEKLHEDDLLIITADHGNDPTYTGTDHTREYVPFLAYSPSMKGHGQLETPKTFATIGATIADNFGLKMPEGTIGESVLNKLV.

6 residues coordinate Mn(2+): D13, D288, H293, D329, H330, and H341.

This sequence belongs to the phosphopentomutase family. Mn(2+) serves as cofactor.

It is found in the cytoplasm. It catalyses the reaction 2-deoxy-alpha-D-ribose 1-phosphate = 2-deoxy-D-ribose 5-phosphate. The catalysed reaction is alpha-D-ribose 1-phosphate = D-ribose 5-phosphate. It participates in carbohydrate degradation; 2-deoxy-D-ribose 1-phosphate degradation; D-glyceraldehyde 3-phosphate and acetaldehyde from 2-deoxy-alpha-D-ribose 1-phosphate: step 1/2. Isomerase that catalyzes the conversion of deoxy-ribose 1-phosphate (dRib-1-P) and ribose 1-phosphate (Rib-1-P) to deoxy-ribose 5-phosphate (dRib-5-P) and ribose 5-phosphate (Rib-5-P), respectively. This chain is Phosphopentomutase, found in Clostridium perfringens (strain ATCC 13124 / DSM 756 / JCM 1290 / NCIMB 6125 / NCTC 8237 / Type A).